The primary structure comprises 168 residues: Large ribosomal subunit protein uL10 (168 aa).

This sequence belongs to the universal ribosomal protein uL10 family. In terms of assembly, part of the ribosomal stalk of the 50S ribosomal subunit. The N-terminus interacts with L11 and the large rRNA to form the base of the stalk. The C-terminus forms an elongated spine to which L12 dimers bind in a sequential fashion forming a multimeric L10(L12)X complex.

Functionally, forms part of the ribosomal stalk, playing a central role in the interaction of the ribosome with GTP-bound translation factors. The protein is Large ribosomal subunit protein uL10 of Laribacter hongkongensis (strain HLHK9).